The sequence spans 222 residues: Large ribosomal subunit protein uL1 (222 aa).

The protein belongs to the universal ribosomal protein uL1 family. As to quaternary structure, part of the 50S ribosomal subunit.

In terms of biological role, binds directly to 23S rRNA. Probably involved in E site tRNA release. Functionally, protein L1 is also a translational repressor protein, it controls the translation of its operon by binding to its mRNA. This is Large ribosomal subunit protein uL1 from Pyrobaculum islandicum (strain DSM 4184 / JCM 9189 / GEO3).